A 277-amino-acid polypeptide reads, in one-letter code: Raffinose operon transcriptional regulatory protein RafR (277 aa).

An HTH araC/xylS-type domain is found at 176-274; sequence NLAVSYLQEN…GASPSYYRKS (99 aa). 2 DNA-binding regions (H-T-H motif) span residues 193-214 and 241-264; these read MDLC…KTHA and VQSI…KRYS.

Functionally, involved in the regulation of the raffinose-operon. The chain is Raffinose operon transcriptional regulatory protein RafR (rafR) from Pediococcus pentosaceus.